The following is a 469-amino-acid chain: 3-isopropylmalate dehydratase large subunit (469 aa).

[4Fe-4S] cluster contacts are provided by cysteine 350, cysteine 410, and cysteine 413.

It belongs to the aconitase/IPM isomerase family. LeuC type 1 subfamily. As to quaternary structure, heterodimer of LeuC and LeuD. [4Fe-4S] cluster serves as cofactor.

It catalyses the reaction (2R,3S)-3-isopropylmalate = (2S)-2-isopropylmalate. It functions in the pathway amino-acid biosynthesis; L-leucine biosynthesis; L-leucine from 3-methyl-2-oxobutanoate: step 2/4. Functionally, catalyzes the isomerization between 2-isopropylmalate and 3-isopropylmalate, via the formation of 2-isopropylmaleate. The sequence is that of 3-isopropylmalate dehydratase large subunit from Rhizobium leguminosarum bv. trifolii (strain WSM2304).